The sequence spans 492 residues: Catalase isozyme 1 (492 aa).

Active-site residues include His65 and Asn138. Heme is bound at residue Tyr348.

It belongs to the catalase family. As to quaternary structure, homotetramer. It depends on heme as a cofactor.

The protein resides in the peroxisome. The enzyme catalyses 2 H2O2 = O2 + 2 H2O. Its function is as follows. Occurs in almost all aerobically respiring organisms and serves to protect cells from the toxic effects of hydrogen peroxide. The protein is Catalase isozyme 1 (CAT1) of Gossypium hirsutum (Upland cotton).